A 215-amino-acid chain; its full sequence is Coat protein (215 aa).

Residues 1-34 (MATQNADVTDATDYKKPPAETEQKALTIQPRSNK) are disordered. The segment covering 12–23 (TDYKKPPAETEQ) has biased composition (basic and acidic residues). Residues 24–34 (KALTIQPRSNK) are compositionally biased toward polar residues.

It belongs to the potexvirus capsid protein family.

The protein localises to the virion. In terms of biological role, required for genome encapsidation. Forms ribonucleoprotein complexes along with TGB1 helicase and viral RNA. The sequence is that of Coat protein from Setaria italica (Foxtail millet).